The chain runs to 101 residues: Enhancer of yellow 2 transcription factor (101 aa).

The protein belongs to the ENY2 family. In terms of assembly, component of the nuclear pore complex (NPC)-associated AMEX complex (anchoring and mRNA export complex), composed of at least e(y)2 and xmas-2. Component of the SAGA transcription coactivator-HAT complexes, at least composed of Ada2b, e(y)2, Pcaf/Gcn5, Taf10 and Nipped-A/Trrap. Within the SAGA complex, e(y)2, Sgf11, and not/nonstop form an additional subcomplex of SAGA called the DUB module (deubiquitination module). Component of the THO complex, composed of at least e(y)2, HPR1, THO2, THOC5, THOC6 and THOC7. Interacts with e(y)1. Interacts with su(Hw) (via zinc fingers). Interacts with xmas-2; required for localization to the nuclear periphery. Interacts with the nuclear pore complex (NPC).

It localises to the nucleus. It is found in the nucleoplasm. The protein resides in the cytoplasm. Functionally, involved in mRNA export coupled transcription activation by association with both the AMEX and the SAGA complexes. The SAGA complex is a multiprotein complex that activates transcription by remodeling chromatin and mediating histone acetylation and deubiquitination. Within the SAGA complex, participates in a subcomplex that specifically deubiquitinates histone H2B. The SAGA complex is recruited to specific gene promoters by activators, where it is required for transcription. Required for nuclear receptor-mediated transactivation. Involved in transcription elongation by recruiting the THO complex onto nascent mRNA. The AMEX complex functions in docking export-competent ribonucleoprotein particles (mRNPs) to the nuclear entrance of the nuclear pore complex (nuclear basket). AMEX participates in mRNA export and accurate chromatin positioning in the nucleus by tethering genes to the nuclear periphery. The chain is Enhancer of yellow 2 transcription factor from Drosophila simulans (Fruit fly).